The following is a 287-amino-acid chain: Acetyl-coenzyme A carboxylase carboxyl transferase subunit beta (287 aa).

A CoA carboxyltransferase N-terminal domain is found at 33–287; sequence LFSKCPGCKH…TLLAFHGGQA (255 aa). C37, C40, C55, and C58 together coordinate Zn(2+). The segment at 37 to 58 adopts a C4-type zinc-finger fold; sequence CPGCKHTIYQKDLGNDSVCPNC.

The protein belongs to the AccD/PCCB family. Acetyl-CoA carboxylase is a heterohexamer composed of biotin carboxyl carrier protein (AccB), biotin carboxylase (AccC) and two subunits each of ACCase subunit alpha (AccA) and ACCase subunit beta (AccD). It depends on Zn(2+) as a cofactor.

It is found in the cytoplasm. It carries out the reaction N(6)-carboxybiotinyl-L-lysyl-[protein] + acetyl-CoA = N(6)-biotinyl-L-lysyl-[protein] + malonyl-CoA. It participates in lipid metabolism; malonyl-CoA biosynthesis; malonyl-CoA from acetyl-CoA: step 1/1. Component of the acetyl coenzyme A carboxylase (ACC) complex. Biotin carboxylase (BC) catalyzes the carboxylation of biotin on its carrier protein (BCCP) and then the CO(2) group is transferred by the transcarboxylase to acetyl-CoA to form malonyl-CoA. The chain is Acetyl-coenzyme A carboxylase carboxyl transferase subunit beta from Streptococcus sanguinis (strain SK36).